The chain runs to 305 residues: Protein FdhE homolog (305 aa).

Belongs to the FdhE family.

The protein resides in the cytoplasm. Necessary for formate dehydrogenase activity. The sequence is that of Protein FdhE homolog from Haemophilus ducreyi (strain 35000HP / ATCC 700724).